A 315-amino-acid polypeptide reads, in one-letter code: MRANAGRAPVFKPGELNVYSAPRDVGEVSRALRHTGRRVMLVPTMGALHEGHLALVRAAKRTPGAVVVVSIFVNPLQFGAGEDLDAYPRTLDQDLAKLRAEGVEIAFTPTAASMYPNGLRTTVQPGPMAAELEGGSRPTHFAGVLTVVLKLLQIVAPDRAFFGEKDYQQLVLIRQMVADLNVNVQVIGVPIVREHDGLAMSSRNRYLDPAQREAAIALSAALTAGAHAATAGVQAALDAARGVLEAVPGIVVDYVELRDGELGPVSPSGSGRLLVAVRFGTTRLLDNVAIEIESIAGTDGQPVGPDGRVQSPWRN.

45–52 is a binding site for ATP; the sequence is MGALHEGH. Residue histidine 52 is the Proton donor of the active site. Position 77 (glutamine 77) interacts with (R)-pantoate. Glutamine 77 serves as a coordination point for beta-alanine. 163–166 is a binding site for ATP; that stretch reads GEKD. Glutamine 169 lines the (R)-pantoate pocket. ATP contacts are provided by residues valine 192 and 200-203; that span reads MSSR.

This sequence belongs to the pantothenate synthetase family. In terms of assembly, homodimer.

It is found in the cytoplasm. It carries out the reaction (R)-pantoate + beta-alanine + ATP = (R)-pantothenate + AMP + diphosphate + H(+). Its pathway is cofactor biosynthesis; (R)-pantothenate biosynthesis; (R)-pantothenate from (R)-pantoate and beta-alanine: step 1/1. Catalyzes the condensation of pantoate with beta-alanine in an ATP-dependent reaction via a pantoyl-adenylate intermediate. The protein is Pantothenate synthetase of Mycobacterium ulcerans (strain Agy99).